The sequence spans 82 residues: MCRCRHPSCITETVFPPLTWLDSEWDEICSLPVARNETHDPSGPRAPVSSMRLGPRSRPYHHGTARLRGSPNCSRDSSSAAT.

The disordered stretch occupies residues 34–82 (ARNETHDPSGPRAPVSSMRLGPRSRPYHHGTARLRGSPNCSRDSSSAAT). Residues 71–82 (PNCSRDSSSAAT) are compositionally biased toward polar residues.

In terms of biological role, part of the gene cluster that mediates the biosynthesis of the lipopeptide antibiotics leucinostatins that show extensive biological activities, including antimalarial, antiviral, antibacterial, antifungal, and antitumor activities, as well as phytotoxic. The function of lcsM within the leucinostatins biosynthesis has not been identified yet. In Purpureocillium lilacinum (Paecilomyces lilacinus), this protein is Leucinostatins biosynthesis cluster protein M.